The sequence spans 243 residues: Mannosyl-3-phosphoglycerate phosphatase (243 aa).

The active-site Nucleophile is D8. 4 residues coordinate Mg(2+): D8, D10, S169, and D204.

Belongs to the HAD-like hydrolase superfamily. MPGP family. Requires Mg(2+) as cofactor.

The protein localises to the cytoplasm. The enzyme catalyses 2-O-(alpha-D-mannosyl)-3-phosphoglycerate + H2O = (2R)-2-O-(alpha-D-mannosyl)-glycerate + phosphate. The protein operates within carbohydrate biosynthesis; 2-(alpha-D-mannosyl)-D-glycerate biosynthesis; 2-(alpha-D-mannosyl)-D-glycerate from GDP-alpha-D-mannose (MPG route): step 2/2. Functionally, hydrolyzes mannosyl-3-phosphoglycerate (MPG) to form the osmolyte mannosylglycerate (MG). The enzyme is absolutely specific for MPG. The sequence is that of Mannosyl-3-phosphoglycerate phosphatase from Pyrococcus horikoshii (strain ATCC 700860 / DSM 12428 / JCM 9974 / NBRC 100139 / OT-3).